Reading from the N-terminus, the 197-residue chain is Molybdenum cofactor guanylyltransferase (197 aa).

GTP contacts are provided by residues 12–14, K25, N53, D71, and D101; that span reads LAG. Position 101 (D101) interacts with Mg(2+).

Belongs to the MobA family. Monomer. Mg(2+) is required as a cofactor.

The protein resides in the cytoplasm. The enzyme catalyses Mo-molybdopterin + GTP + H(+) = Mo-molybdopterin guanine dinucleotide + diphosphate. Transfers a GMP moiety from GTP to Mo-molybdopterin (Mo-MPT) cofactor (Moco or molybdenum cofactor) to form Mo-molybdopterin guanine dinucleotide (Mo-MGD) cofactor. The sequence is that of Molybdenum cofactor guanylyltransferase from Bordetella pertussis (strain Tohama I / ATCC BAA-589 / NCTC 13251).